A 64-amino-acid polypeptide reads, in one-letter code: Large ribosomal subunit protein bL35 (64 aa).

A compositionally biased stretch (basic residues) spans 1–15; that stretch reads MPKSKTHSGTAKRFK. The tract at residues 1–23 is disordered; it reads MPKSKTHSGTAKRFKVSGSGKIL.

It belongs to the bacterial ribosomal protein bL35 family.

The chain is Large ribosomal subunit protein bL35 from Rhodococcus jostii (strain RHA1).